A 271-amino-acid polypeptide reads, in one-letter code: Mannosyl-3-phosphoglycerate phosphatase (271 aa).

The active-site Nucleophile is Asp13. Mg(2+) is bound by residues Asp13, Asp15, and Asp214.

Belongs to the HAD-like hydrolase superfamily. MPGP family. Requires Mg(2+) as cofactor.

It is found in the cytoplasm. The catalysed reaction is 2-O-(alpha-D-mannosyl)-3-phosphoglycerate + H2O = (2R)-2-O-(alpha-D-mannosyl)-glycerate + phosphate. The sequence is that of Mannosyl-3-phosphoglycerate phosphatase (yedP) from Salmonella choleraesuis (strain SC-B67).